A 243-amino-acid polypeptide reads, in one-letter code: 3-deoxy-manno-octulosonate cytidylyltransferase (243 aa).

It belongs to the KdsB family.

It localises to the cytoplasm. It carries out the reaction 3-deoxy-alpha-D-manno-oct-2-ulosonate + CTP = CMP-3-deoxy-beta-D-manno-octulosonate + diphosphate. The protein operates within nucleotide-sugar biosynthesis; CMP-3-deoxy-D-manno-octulosonate biosynthesis; CMP-3-deoxy-D-manno-octulosonate from 3-deoxy-D-manno-octulosonate and CTP: step 1/1. It participates in bacterial outer membrane biogenesis; lipopolysaccharide biosynthesis. In terms of biological role, activates KDO (a required 8-carbon sugar) for incorporation into bacterial lipopolysaccharide in Gram-negative bacteria. This Helicobacter pylori (strain J99 / ATCC 700824) (Campylobacter pylori J99) protein is 3-deoxy-manno-octulosonate cytidylyltransferase.